Consider the following 642-residue polypeptide: Threonine--tRNA ligase (642 aa).

Residues 1 to 61 (MPVITLPDGS…ETDAELSIIT (61 aa)) form the TGS domain. Residues 243–534 (DHRKIGKQLD…LIEEYAGRFP (292 aa)) form a catalytic region. Positions 334, 385, and 511 each coordinate Zn(2+).

Belongs to the class-II aminoacyl-tRNA synthetase family. As to quaternary structure, homodimer. Requires Zn(2+) as cofactor.

Its subcellular location is the cytoplasm. It carries out the reaction tRNA(Thr) + L-threonine + ATP = L-threonyl-tRNA(Thr) + AMP + diphosphate + H(+). Catalyzes the attachment of threonine to tRNA(Thr) in a two-step reaction: L-threonine is first activated by ATP to form Thr-AMP and then transferred to the acceptor end of tRNA(Thr). Also edits incorrectly charged L-seryl-tRNA(Thr). This chain is Threonine--tRNA ligase, found in Shewanella baltica (strain OS155 / ATCC BAA-1091).